A 60-amino-acid polypeptide reads, in one-letter code: Homeobox protein EgHBX4 (60 aa).

The segment at residues 1-60 (SRRERTIYTPEQLEAMEEVFGVNRYPDVSMREELASRLGINESKIQVWFKNRRAKLRNLE) is a DNA-binding region (homeobox).

Belongs to the paired homeobox family. Bicoid subfamily.

Its subcellular location is the nucleus. The chain is Homeobox protein EgHBX4 (HBX4) from Echinococcus granulosus (Hydatid tapeworm).